We begin with the raw amino-acid sequence, 250 residues long: 5'/3'-nucleotidase SurE (250 aa).

4 residues coordinate a divalent metal cation: Asp8, Asp9, Ser39, and Asn92.

Belongs to the SurE nucleotidase family. The cofactor is a divalent metal cation.

It is found in the cytoplasm. It carries out the reaction a ribonucleoside 5'-phosphate + H2O = a ribonucleoside + phosphate. The enzyme catalyses a ribonucleoside 3'-phosphate + H2O = a ribonucleoside + phosphate. The catalysed reaction is [phosphate](n) + H2O = [phosphate](n-1) + phosphate + H(+). Functionally, nucleotidase with a broad substrate specificity as it can dephosphorylate various ribo- and deoxyribonucleoside 5'-monophosphates and ribonucleoside 3'-monophosphates with highest affinity to 3'-AMP. Also hydrolyzes polyphosphate (exopolyphosphatase activity) with the preference for short-chain-length substrates (P20-25). Might be involved in the regulation of dNTP and NTP pools, and in the turnover of 3'-mononucleotides produced by numerous intracellular RNases (T1, T2, and F) during the degradation of various RNAs. The sequence is that of 5'/3'-nucleotidase SurE from Wigglesworthia glossinidia brevipalpis.